The following is a 510-amino-acid chain: Serine/threonine protein phosphatase 2A 57 kDa regulatory subunit B' kappa isoform (510 aa).

A disordered region spans residues 1–51; the sequence is MWKGFLSKLPRKTSASGRGADLDSGQCSNGAGNGNPIQRTSSCGSIPSGRS. A compositionally biased stretch (polar residues) spans 25–51; that stretch reads GQCSNGAGNGNPIQRTSSCGSIPSGRS. Phosphothreonine occurs at positions 476 and 493. Ser502 carries the post-translational modification Phosphoserine. At Thr508 the chain carries Phosphothreonine.

The protein belongs to the phosphatase 2A regulatory subunit B56 family. As to quaternary structure, PP2A consists of a common heteromeric enzyme, composed of a catalytic subunit (subunits C), a constant regulatory subunit (subunit A), and a variety of regulatory subunits such as subunits B (the R2/B/PR55/B55, R3/B''/PR72/PR130/PR59 and R5/B'/B56 families). Interacts with SIT1. Post-translationally, phosphorylated at Thr-476, Thr-493, Ser-502 and Thr-508 by SIT1. Expressed in root stele and epidermal cells.

It is found in the cytoplasm. Its subcellular location is the cytosol. It localises to the cell membrane. Functionally, b regulatory subunit of phosphatase 2A (PP2A) involved in salt stress response. Under salt stress conditions, required for the catalytic activity of PP2A and the dephosphorylation of SIT1, a negative regulator of salt tolerance. Dephosphorylation of SIT1 turns off salt-induced SIT1 activity directly, which has a positive effect on salt tolerance. This is Serine/threonine protein phosphatase 2A 57 kDa regulatory subunit B' kappa isoform from Oryza sativa subsp. japonica (Rice).